We begin with the raw amino-acid sequence, 244 residues long: rRNA adenine N-6-methyltransferase (244 aa).

Positions 11, 13, 38, 59, 84, and 101 each coordinate S-adenosyl-L-methionine.

It belongs to the class I-like SAM-binding methyltransferase superfamily. rRNA adenine N(6)-methyltransferase family.

It carries out the reaction adenosine(2085) in 23S rRNA + 2 S-adenosyl-L-methionine = N(6)-dimethyladenosine(2085) in 23S rRNA + 2 S-adenosyl-L-homocysteine + 2 H(+). In terms of biological role, this protein produces a dimethylation of the adenine residue at position 2085 in 23S rRNA, resulting in reduced affinity between ribosomes and macrolide-lincosamide-streptogramin B antibiotics. This Staphylococcus aureus protein is rRNA adenine N-6-methyltransferase (ermC).